The following is a 183-amino-acid chain: Photosystem II extrinsic protein V (183 aa).

A signal peptide spans 1-31 (MTFGHCRRASTLRSAFVLGLCGLLLAGCSGA). Heme c is bound by residues Cys-84, Cys-87, His-88, and Cys-138.

Belongs to the cytochrome c family. PsbV subfamily. In terms of assembly, PSII is composed of 1 copy each of membrane proteins PsbA, PsbB, PsbC, PsbD, PsbE, PsbF, PsbH, PsbI, PsbJ, PsbK, PsbL, PsbM, PsbT, PsbX, Psb30/Ycf12, peripheral proteins PsbO, CyanoQ (PsbQ), PsbU, PsbV and a large number of cofactors. It forms dimeric complexes. The cofactor is heme c.

It is found in the cell inner membrane. Its function is as follows. Probably one of the extrinsic, lumenal subunits of photosystem II (PSII). PSII is a light-driven water plastoquinone oxidoreductase, using light energy to abstract electrons from H(2)O, generating a proton gradient subsequently used for ATP formation. The extrinsic proteins stabilize the structure of photosystem II oxygen-evolving complex (OEC), the ion environment of oxygen evolution and protect the OEC against heat-induced inactivation. Low-potential cytochrome c that plays a role in the OEC of PSII. The sequence is that of Photosystem II extrinsic protein V (psbV1) from Gloeobacter violaceus (strain ATCC 29082 / PCC 7421).